We begin with the raw amino-acid sequence, 356 residues long: MSRFWSPVVHRLTPYVPGEQPKLTNLIKLNTNESPYGPPPGALEAIRAAADDTLRLYSDPTSERLRAAIAQAHDVGMDEIFVGNGSDEVLAHAFHALLQHDAPLLTPDITYSFYPVYCGLYGIAHQPVPLDDAMRIDVDDYRRPCAGLVLPNPNAPTGIALGLGQIETLLRAQPDRVVVIDEAYVDFGADTAIPLVRRFPNLLVVRTLSKSHALAGLRVGYAIGHPDLVEALNRVKDSFNSYPLDRLAQAGAAAAIADREWLARTTGKIIKTRIGLTSSLRGLGFEVLPSQANFVFARHPDRDAAHLAAALRERAIIVRHFRTPRIAEWLRITVGTDEECRVLTDALGTILTRNAD.

The residue at position 210 (lysine 210) is an N6-(pyridoxal phosphate)lysine.

It belongs to the class-II pyridoxal-phosphate-dependent aminotransferase family. Histidinol-phosphate aminotransferase subfamily. Homodimer. Pyridoxal 5'-phosphate serves as cofactor.

The enzyme catalyses L-histidinol phosphate + 2-oxoglutarate = 3-(imidazol-4-yl)-2-oxopropyl phosphate + L-glutamate. The protein operates within amino-acid biosynthesis; L-histidine biosynthesis; L-histidine from 5-phospho-alpha-D-ribose 1-diphosphate: step 7/9. This Gluconacetobacter diazotrophicus (strain ATCC 49037 / DSM 5601 / CCUG 37298 / CIP 103539 / LMG 7603 / PAl5) protein is Histidinol-phosphate aminotransferase.